Here is a 187-residue protein sequence, read N- to C-terminus: Rusticyanin (187 aa).

Positions 1-32 (MYTQNTMKKNWYVTVGAAAALAATVGMGTAMA) are cleaved as a signal peptide. A Plastocyanin-like domain is found at 85–187 (SFEVHDKKNP…TGMFGKIIVK (103 aa)). The Cu cation site is built by H117, C170, H175, and M180.

Monomer. The cofactor is Cu cation.

The protein localises to the periplasm. In terms of biological role, electron carrier from cytochrome c552 to the A-type oxidase. The protein is Rusticyanin (rus) of Acidithiobacillus ferridurans.